We begin with the raw amino-acid sequence, 289 residues long: Putative 2-aminoethylphosphonate transport system permease protein PhnU (289 aa).

6 helical membrane-spanning segments follow: residues 19-39, 76-96, 111-131, 150-170, 202-222, and 254-274; these read WLLL…SLIV, FFAT…LVFI, FIAL…GSAG, FLYS…PLVM, VIFP…LLLT, and YTVA…LFSL. One can recognise an ABC transmembrane type-1 domain in the interval 68–275; it reads LLNTLQIAFF…VLSLGLFSLY (208 aa).

The protein belongs to the binding-protein-dependent transport system permease family.

The protein resides in the cell inner membrane. Functionally, probably part of the PhnSTUV complex (TC 3.A.1.11.5) involved in 2-aminoethylphosphonate import. Probably responsible for the translocation of the substrate across the membrane. The polypeptide is Putative 2-aminoethylphosphonate transport system permease protein PhnU (phnU) (Salmonella typhi).